The chain runs to 406 residues: Mitochondrial intermembrane space import and assembly protein 40 (406 aa).

The transit peptide at 1 to 23 (MFRVSLQATRRVAFRSARQIRFY) directs the protein to the mitochondrion. Over 24 to 37 (SAHPPSGGVSHMNK) the chain is Mitochondrial matrix. A helical; Signal-anchor for type II membrane protein membrane pass occupies residues 38–54 (PALLLAGFSTLGAIYVA). Topologically, residues 55-406 (DGCPTLIERK…AVTNTDDEKK (352 aa)) are mitochondrial intermembrane. Disordered regions lie at residues 67 to 110 (PAEK…TTPE) and 142 to 276 (VNEQ…PETG). The span at 205 to 224 (ASKDGSEGESDVVLHEKSPA) shows a compositional bias: basic and acidic residues. Positions 242 to 260 (SGGTAEQSATAAAAAAGVQ) are enriched in low complexity. 3 cysteine pairs are disulfide-bonded: Cys282-Cys284, Cys293-Cys326, and Cys303-Cys316. A CHCH domain is found at 290 to 334 (YGPCGEEFKSAFSCFVYSEADPKGINCVEKFSTMQNCFRKYPDYY). 2 consecutive short sequence motifs (cx9C motif) follow at residues 293–303 (CGEEFKSAFSC) and 316–326 (CVEKFSTMQNC). Disordered stretches follow at residues 341-365 (EEEASAEASKIEDKSTTPVSTATST) and 384-406 (EENPQLKDTPEAAAVTNTDDEKK). The segment covering 356–365 (TTPVSTATST) has biased composition (low complexity). The span at 384–393 (EENPQLKDTP) shows a compositional bias: basic and acidic residues.

As to quaternary structure, monomer. Cu(2+) serves as cofactor. Zn(2+) is required as a cofactor.

It is found in the mitochondrion inner membrane. Required for the import and folding of small cysteine-containing proteins (small Tim) in the mitochondrial intermembrane space (IMS). Forms a redox cycle with ERV1 that involves a disulfide relay system. Precursor proteins to be imported into the IMS are translocated in their reduced form into the mitochondria. The oxidized form of MIA40 forms a transient intermolecular disulfide bridge with the reduced precursor protein, resulting in oxidation of the precursor protein that now contains an intramolecular disulfide bond and is able to undergo folding in the IMS. This is Mitochondrial intermembrane space import and assembly protein 40 (MIA40) from Kluyveromyces lactis (strain ATCC 8585 / CBS 2359 / DSM 70799 / NBRC 1267 / NRRL Y-1140 / WM37) (Yeast).